A 216-amino-acid chain; its full sequence is Large ribosomal subunit protein uL24m (216 aa).

Residues 1–9 (MRLSALLAL) constitute a mitochondrion transit peptide. Serine 24 carries the phosphoserine modification. Residues 56-89 (LFCGDTVEILEGKDAGKQGKVVQVIRQRNWVVVG) form the KOW domain.

This sequence belongs to the universal ribosomal protein uL24 family. As to quaternary structure, component of the mitochondrial large ribosomal subunit (mt-LSU). Mature mammalian 55S mitochondrial ribosomes consist of a small (28S) and a large (39S) subunit. The 28S small subunit contains a 12S ribosomal RNA (12S mt-rRNA) and 30 different proteins. The 39S large subunit contains a 16S rRNA (16S mt-rRNA), a copy of mitochondrial valine transfer RNA (mt-tRNA(Val)), which plays an integral structural role, and 52 different proteins.

The protein localises to the mitochondrion. The chain is Large ribosomal subunit protein uL24m (MRPL24) from Homo sapiens (Human).